Consider the following 116-residue polypeptide: Large ribosomal subunit protein bL17 (116 aa).

This sequence belongs to the bacterial ribosomal protein bL17 family. As to quaternary structure, part of the 50S ribosomal subunit. Contacts protein L32.

This chain is Large ribosomal subunit protein bL17, found in Wolinella succinogenes (strain ATCC 29543 / DSM 1740 / CCUG 13145 / JCM 31913 / LMG 7466 / NCTC 11488 / FDC 602W) (Vibrio succinogenes).